A 500-amino-acid chain; its full sequence is L-arabinose isomerase (500 aa).

Mn(2+) is bound by residues E306, E333, H350, and H450.

Belongs to the arabinose isomerase family. As to quaternary structure, homohexamer. Mn(2+) is required as a cofactor.

The enzyme catalyses beta-L-arabinopyranose = L-ribulose. Its pathway is carbohydrate degradation; L-arabinose degradation via L-ribulose; D-xylulose 5-phosphate from L-arabinose (bacterial route): step 1/3. Catalyzes the conversion of L-arabinose to L-ribulose. The chain is L-arabinose isomerase from Shigella flexneri serotype 5b (strain 8401).